Reading from the N-terminus, the 104-residue chain is Type VII secretion system extracellular protein B (104 aa).

It belongs to the WXG100 family. In terms of assembly, homodimer. When mixed with EsxA does not form heterodimers. Forms heterodimers with EsxD.

It is found in the secreted. Its function is as follows. Virulence factor that is important for the establishment of infection in the host. EsxB is required for EsxA synthesis as well as secretion. Mediates together with EsxA the release of S.aureus from the host cell. Also inhibits host cytokine production and thus modulates dendritic cell-mediated immunity. The polypeptide is Type VII secretion system extracellular protein B (Staphylococcus aureus (strain USA300)).